A 164-amino-acid polypeptide reads, in one-letter code: C-type natriuretic peptide (164 aa).

Residues 1 to 23 (MVASRLAAGGLLLLALLALALDG) form the signal peptide. 2 disordered regions span residues 24–93 (KPAP…AAAA) and 115–134 (HPEH…GASR). The propeptide occupies 24–142 (KPAPPQPLRK…SRRLKGVAKK (119 aa)). A compositionally biased stretch (gly residues) spans 58-67 (AGGGGGGGRS). Over residues 68 to 93 (GSKAANAAPTAPKSKGGAAAAAAAAA) the composition is skewed to low complexity. Over residues 121–132 (GGGGGGGGGGGA) the composition is skewed to gly residues. A disulfide bridge connects residues C148 and C164.

This sequence belongs to the natriuretic peptide family. Expressed by the venom gland.

The protein localises to the secreted. Its function is as follows. Snake venom natriuretic peptide that has a vasorelaxant activity in rat aortic strips and a diuretic potency in anesthetized rats. May act by activating natriuretic receptors (NPR1 and/or NPR2). This chain is C-type natriuretic peptide, found in Philodryas olfersii (Green snake).